We begin with the raw amino-acid sequence, 49 residues long: MKKEITNNETVKNLEFKGLLDESQKLAKVNDLWYFVKSKENRWILGSGH.

In terms of biological role, suggested to be the precursor for an exported, modified peptide that has antimicrobial and/or signaling properties. Synthesis requires YydG and YydH; the peptide is proposed to be exported by the YydIJ transporter. In the absence of the transporter, the modified peptide activates the LiaRS two-component regulatory system, possibly by eliciting cell envelope stress. This activation can occur in trans in cocultured cells lacking either the transporter or the whole operon. The sequence is that of Putative exported peptide YydF (yydF) from Bacillus subtilis (strain 168).